Consider the following 115-residue polypeptide: Probable non-functional T cell receptor beta variable 7-1 (115 aa).

The first 21 residues, 1-21 (MGTRLLCWAAICLLGADHTGA), serve as a signal peptide directing secretion. An Ig-like domain is found at 22–115 (GVSQSLRHKV…LAVYLCASSS (94 aa)).

Most probably, the alpha-beta TR is not assembled due to incorrect folding of the beta chain. Alpha-beta TR is a heterodimer composed of an alpha and beta chain; disulfide-linked. The alpha-beta TR is associated with the transmembrane signaling CD3 coreceptor proteins to form the TR-CD3 (TcR or TCR). The assembly of alpha-beta TR heterodimers with CD3 occurs in the endoplasmic reticulum where a single alpha-beta TR heterodimer associates with one CD3D-CD3E heterodimer, one CD3G-CD3E heterodimer and one CD247 homodimer forming a stable octameric structure. CD3D-CD3E and CD3G-CD3E heterodimers preferentially associate with TR alpha and TR beta chains, respectively. The association of the CD247 homodimer is the last step of TcR assembly in the endoplasmic reticulum and is required for transport to the cell surface.

It localises to the cell membrane. In terms of biological role, probable non-functional open reading frame (ORF) of V region of the variable domain of T cell receptor (TR) beta chain. Non-functional ORF generally cannot participate in the synthesis of a productive T cell receptor (TR) chain due to altered V-(D)-J or switch recombination and/or splicing site (at mRNA level) and/or conserved amino acid change (protein level). Alpha-beta T cell receptors are antigen specific receptors which are essential to the immune response and are present on the cell surface of T lymphocytes. Recognize peptide-major histocompatibility (MH) (pMH) complexes that are displayed by antigen presenting cells (APC), a prerequisite for efficient T cell adaptive immunity against pathogens. Binding of alpha-beta TR to pMH complex initiates TR-CD3 clustering on the cell surface and intracellular activation of LCK that phosphorylates the ITAM motifs of CD3G, CD3D, CD3E and CD247 enabling the recruitment of ZAP70. In turn ZAP70 phosphorylates LAT, which recruits numerous signaling molecules to form the LAT signalosome. The LAT signalosome propagates signal branching to three major signaling pathways, the calcium, the mitogen-activated protein kinase (MAPK) kinase and the nuclear factor NF-kappa-B (NF-kB) pathways, leading to the mobilization of transcription factors that are critical for gene expression and essential for T cell growth and differentiation. The T cell repertoire is generated in the thymus, by V-(D)-J rearrangement. This repertoire is then shaped by intrathymic selection events to generate a peripheral T cell pool of self-MH restricted, non-autoaggressive T cells. Post-thymic interaction of alpha-beta TR with the pMH complexes shapes TR structural and functional avidity. This Homo sapiens (Human) protein is Probable non-functional T cell receptor beta variable 7-1.